Reading from the N-terminus, the 149-residue chain is Internal scaffolding protein ORF3 (149 aa).

The protein belongs to the microvidae B protein family.

The protein localises to the host cytoplasm. Its function is as follows. Participates in the assembly of the viral procapsid in the cytoplasm. Released from the procapsid upon genome packaging, possibly through affinity displacement by the protein ORF8, or by proteolysis. The sequence is that of Internal scaffolding protein ORF3 from Spiroplasma virus 4 (SpV4).